The following is a 190-amino-acid chain: Dynactin subunit 6 (190 aa).

The residue at position 186 (threonine 186) is a Phosphothreonine; by CDK1.

The protein belongs to the dynactin subunits 5/6 family. Dynactin subunit 6 subfamily. As to quaternary structure, subunit of dynactin, a multiprotein complex part of a tripartite complex with dynein and a adapter, such as BICDL1, BICD2 or HOOK3. The dynactin complex is built around ACTR1A/ACTB filament and consists of an actin-related filament composed of a shoulder domain, a pointed end and a barbed end. Its length is defined by its flexible shoulder domain. The soulder is composed of 2 DCTN1 subunits, 4 DCTN2 and 2 DCTN3. The 4 DCNT2 (via N-terminus) bind the ACTR1A filament and act as molecular rulers to determine the length. The pointed end is important for binding dynein-dynactin cargo adapters. Consists of 4 subunits: ACTR10, DCNT4, DCTN5 and DCTN6. Within the complex DCTN6 forms a heterodimer with DCTN5. The barbed end is composed of a CAPZA1:CAPZB heterodimers, which binds ACTR1A/ACTB filament and dynactin and stabilizes dynactin. Interacts with PLK1. Interacts with N4BP2L1. Post-translationally, phosphorylation at Thr-186 by CDK1 during mitotic prometaphase creates a binding site for PLK1 that facilitates its recruitment to kinetochores.

Its subcellular location is the cytoplasm. The protein resides in the cytoskeleton. It is found in the chromosome. The protein localises to the centromere. It localises to the kinetochore. Its function is as follows. Part of the dynactin complex that activates the molecular motor dynein for ultra-processive transport along microtubules. This Bos taurus (Bovine) protein is Dynactin subunit 6 (DCTN6).